A 380-amino-acid chain; its full sequence is Erythronate-4-phosphate dehydrogenase (380 aa).

Residues Ser45 and Thr66 each contribute to the substrate site. Residues Asp146, Thr174, 205–207 (ASR), and Asp231 contribute to the NAD(+) site. Arg207 is an active-site residue. Glu236 is a catalytic residue. His253 (proton donor) is an active-site residue. Gly256 lines the NAD(+) pocket. Residue Tyr257 participates in substrate binding.

The protein belongs to the D-isomer specific 2-hydroxyacid dehydrogenase family. PdxB subfamily. In terms of assembly, homodimer.

Its subcellular location is the cytoplasm. The catalysed reaction is 4-phospho-D-erythronate + NAD(+) = (R)-3-hydroxy-2-oxo-4-phosphooxybutanoate + NADH + H(+). Its pathway is cofactor biosynthesis; pyridoxine 5'-phosphate biosynthesis; pyridoxine 5'-phosphate from D-erythrose 4-phosphate: step 2/5. Functionally, catalyzes the oxidation of erythronate-4-phosphate to 3-hydroxy-2-oxo-4-phosphonooxybutanoate. This Pseudomonas putida (strain W619) protein is Erythronate-4-phosphate dehydrogenase.